The chain runs to 276 residues: Hydroxyethylthiazole kinase (276 aa).

Substrate is bound by residues methionine 53 and alanine 202.

The protein belongs to the Thz kinase family. Mg(2+) serves as cofactor.

The catalysed reaction is 5-(2-hydroxyethyl)-4-methylthiazole + ATP = 4-methyl-5-(2-phosphooxyethyl)-thiazole + ADP + H(+). It functions in the pathway cofactor biosynthesis; thiamine diphosphate biosynthesis; 4-methyl-5-(2-phosphoethyl)-thiazole from 5-(2-hydroxyethyl)-4-methylthiazole: step 1/1. Functionally, thiazole kinase involved in thiamine salvage pathway. This is Hydroxyethylthiazole kinase (THIM) from Arabidopsis thaliana (Mouse-ear cress).